A 766-amino-acid polypeptide reads, in one-letter code: Serine/threonine-protein kinase B-raf (766 aa).

The segment covering 1 to 13 has biased composition (gly residues); it reads MAALSGGGGGGAE. The segment at 1–38 is disordered; that stretch reads MAALSGGGGGGAEPGQALFNGDMEPEAGAGAGAAASSA. Alanine 2 carries the post-translational modification N-acetylalanine. Serine 151 is subject to Phosphoserine. In terms of domain architecture, RBD spans 155–227; the sequence is PIVRVFLPNK…TGEELHVEVL (73 aa). A Phorbol-ester/DAG-type zinc finger spans residues 234 to 280; sequence THNFVRKTFFTLAFCDFCRKLLFQGFRCQTCGYKFHQRCSTEVPLMC. Zn(2+)-binding residues include histidine 235, cysteine 248, cysteine 251, cysteine 261, cysteine 264, histidine 269, cysteine 272, and cysteine 280. The tract at residues 308–454 is disordered; sequence AETALTSGSS…DSSDDWEIPD (147 aa). Positions 314–341 are enriched in low complexity; that stretch reads SGSSPSAPASDSIGPQILTSPSPSKSIP. Serine 333 carries the post-translational modification Phosphoserine. Positions 348-363 are enriched in basic and acidic residues; that stretch reads PADEDHRNQFGQRDRS. Serine 365 carries the post-translational modification Phosphoserine; by SGK1. Residue threonine 373 is modified to Phosphothreonine; by autocatalysis. Threonine 396 bears the Phosphothreonine mark. At serine 399 the chain carries Phosphoserine. Residue threonine 401 is modified to Phosphothreonine. Residues 423–447 show a composition bias toward basic and acidic residues; the sequence is QRERKSSSSSEDRNRMKTLGRRDSS. Phosphoserine is present on residues serine 446 and serine 447. Residues 457–717 form the Protein kinase domain; it reads ITVGQRIGSG…PQILASIELL (261 aa). ATP contacts are provided by residues 463-471 and lysine 483; that span reads IGSGSFGTV. The active-site Proton acceptor is aspartate 576. Lysine 578 participates in a covalent cross-link: Glycyl lysine isopeptide (Lys-Gly) (interchain with G-Cter in ubiquitin). Arginine 671 carries the post-translational modification Omega-N-methylarginine; by PRMT5. A phosphoserine mark is found at serine 729 and serine 750. Threonine 753 is modified (phosphothreonine; by MAPK1).

It belongs to the protein kinase superfamily. TKL Ser/Thr protein kinase family. RAF subfamily. As to quaternary structure, monomer. Homodimer. Heterodimerizes with RAF1, and the heterodimer possesses a highly increased kinase activity compared to the respective homodimers or monomers. Heterodimerization is mitogen-regulated and enhanced by 14-3-3 proteins. MAPK1/ERK2 activation can induce a negative feedback that promotes the dissociation of the heterodimer by phosphorylating BRAF at Thr-753. Heterodimerizes (via N-terminus) with KSR1 (via N-terminus) or KSR2 (via N-terminus) in a MAP2K1-dependent manner. Interacts with MAP2K1 and MAP2K2. Found in a complex with at least BRAF, HRAS, MAP2K1, MAPK3 and RGS14. Interacts with RIT1. Interacts (via N-terminus) with RGS14 (via RBD domains); the interaction mediates the formation of a ternary complex with RAF1, a ternary complex inhibited by GNAI1. Interacts with DGKH. Interacts with PRMT5. Interacts with KSR2. Interacts with AKAP13, MAP2K1 and KSR1. Identified in a complex with AKAP13, MAP2K1 and KSR1. Interacts with FNIP1 and FNIP2. Requires Zn(2+) as cofactor. In terms of processing, phosphorylation at Ser-365 by SGK1 inhibits its activity. Phosphorylation at Thr-753 by MAPK1. Dephosphorylation of Ser-365 by the SHOC2-MRAS-PP1c (SMP) complex consisting of SHOC2, GTP-bound M-Ras/MRAS and the catalytic subunit of protein phosphatase 1 (PPP1CA, PPP1CB or PPP1CC); this relieves inactivation and stimulates kinase activity. Post-translationally, methylation at Arg-671 decreases stability and kinase activity. Ubiquitinated by RNF149; which leads to proteasomal degradation. Polyubiquitinated at Lys-578 in response to EGF. Brain and testis.

It is found in the nucleus. The protein localises to the cytoplasm. Its subcellular location is the cell membrane. It catalyses the reaction L-seryl-[protein] + ATP = O-phospho-L-seryl-[protein] + ADP + H(+). The enzyme catalyses L-threonyl-[protein] + ATP = O-phospho-L-threonyl-[protein] + ADP + H(+). Its activity is regulated as follows. In quiescent cells, maintained in an inactive state via an intramolecular interaction between the protein kinase and N-terminal domains. Following mitogen-mediated cell activation, binds via its RGB domain to active HRAS (GTP-bound) which releases the inhibitory intramolecular interaction between the two domains. This allows the MAP2K1-mediated dimerization of KSR1 or KSR2, and BRAF which activates BRAF. In terms of biological role, protein kinase involved in the transduction of mitogenic signals from the cell membrane to the nucleus. Phosphorylates MAP2K1, and thereby activates the MAP kinase signal transduction pathway. Phosphorylates PFKFB2. May play a role in the postsynaptic responses of hippocampal neurons. In Homo sapiens (Human), this protein is Serine/threonine-protein kinase B-raf.